Here is a 325-residue protein sequence, read N- to C-terminus: MEISDIIYGQHHIDGVLEELIKSAPVQRLKGIYQGGASFLVNRKWNVTRYEHSIGVMLLIKKLGGTIEEQIAGLLHDVSHTAFSHVVDVVFENQAEDYHENIFQQVIVHSEIPDILQKHGYHTEELLSDDSRWTLLEQPAPELCADRTDYTLRDMYRYGHINLHEAQTFLDHLIVRNGRMFPDSIEAAEWFVSVYYKEVIDFFLNPVNVYGYEYLARALKAALRHDVISAEDLLKTDQEVLNILRASKNEEVLSLLTSIHPGIQVIEDDIQYDFHQKKKMRLIDPSIFLDDKWIKSSGVSEKVRKMGEAAYQKAKKGVYIKILKQ.

An HD domain is found at 49 to 151 (RYEHSIGVML…ELCADRTDYT (103 aa)).

This is an uncharacterized protein from Bacillus subtilis (strain 168).